The primary structure comprises 218 residues: uncharacterized protein (218 aa).

The ACT domain maps to 4-83 (GISIEAENKV…IHSSLKKIYG (80 aa)).

This is an uncharacterized protein from Methanocaldococcus jannaschii (strain ATCC 43067 / DSM 2661 / JAL-1 / JCM 10045 / NBRC 100440) (Methanococcus jannaschii).